A 108-amino-acid polypeptide reads, in one-letter code: ATP synthase subunit H, mitochondrial (108 aa).

The N-terminal 19 residues, 1–19, are a transit peptide targeting the mitochondrion; sequence MFTLRAASRRAFSTSIARR. Disordered regions lie at residues 40–60 and 75–108; these read AKDA…KPPV and APVD…GVAV. Positions 47–60 are enriched in low complexity; sequence VKPWSAPSAPKPPV. The span at 81–92 shows a compositional bias: polar residues; that stretch reads GQTNSKSASPQA. The span at 93-108 shows a compositional bias: acidic residues; sequence NDEDWLAFEEEEGVAV.

In terms of assembly, F-type ATP synthases have 2 components, the catalytic core F(1) and the membrane-embedded component F(0), linked together by a central stalk and a peripheral stalk. The central stalk, also called rotor shaft, is often seen as part of F(1). The peripheral stalk is seen as part of F(0). F(0) contains the membrane channel next to the rotor. F-type ATP synthases form dimers but each monomer functions independently in ATP generation. The dimer consists of 17 different polypeptides: ATP1 (subunit alpha, 3 molecules per monomer, part of F(1)), ATP2 (subunit beta, 3 copies per monomer, part of F(1)), ATP3 (subunit gamma, part of the central stalk), ATP4 (subunit b, part of the peripheral stalk), ATP5/OSCP (subunit 5/OSCP, part of the peripheral stalk), ATP6 (subunit a, part of the peripheral stalk), ATP7 (subunit d, part of the peripheral stalk), ATP8 (subunit 8, part of the peripheral stalk), OLI1 (subunit c, part of the rotor, 10 molecules per monomer), ATP14 (subunit H, part of the peripheral stalk), ATP15 (subunit epsilon, part of the central stalk), ATP16 (subunit delta, part of the central stalk), ATP17 (subunit f, part of the peripheral stalk), ATP18 (subunit i/j, part of the peripheral stalk), ATP19 (subunit k, dimer-specific, at interface between monomers), ATP20 (subunit g, at interface between monomers), TIM11 (subunit e, at interface between monomers).

The protein resides in the mitochondrion inner membrane. Mitochondrial membrane ATP synthase (F(1)F(0) ATP synthase or Complex V) produces ATP from ADP in the presence of a proton gradient across the membrane which is generated by electron transport complexes of the respiratory chain. F-type ATP synthases consist of two structural domains, F(1) - containing the extramembraneous catalytic core, and F(0) - containing the membrane proton channel, linked together by a central stalk and a peripheral stalk. During catalysis, ATP synthesis in the catalytic domain of F(1) is coupled via a rotary mechanism of the central stalk subunits to proton translocation. Part of the peripheral stalk. In Yarrowia lipolytica (strain CLIB 122 / E 150) (Yeast), this protein is ATP synthase subunit H, mitochondrial.